Consider the following 420-residue polypeptide: Dachshund homolog dac-1 (420 aa).

A disordered region spans residues 23–77 (PSSSSSSSNNSSSNTSSSNFLSPYEYQESSTSPRDTTDSSGESSLSSSGSSSSLN). 2 stretches are compositionally biased toward low complexity: residues 24 to 41 (SSSSSSSNNSSSNTSSSN) and 51 to 77 (SSTSPRDTTDSSGESSLSSSGSSSSLN). Residues 85–171 (KLIKFRGHNV…LLKTSDFEKL (87 aa)) form a DACHbox-N region. The span at 242–258 (NSFERADDDDQNQRDAD) shows a compositional bias: basic and acidic residues. The interval 242-321 (NSFERADDDD…SSSSSGKNDE (80 aa)) is disordered. Over residues 263–273 (LNLSKSGGNSE) the composition is skewed to polar residues. The span at 297–317 (GGSNSNSLSMSMEAGSSSSSG) shows a compositional bias: low complexity.

Belongs to the DACH/dachshund family. As to expression, expressed in AFD, AWC, ASE and ASK neurons. Expressed in the alae.

It is found in the nucleus. In terms of biological role, transcription factor. Plays a role in the thermotactic response. In Caenorhabditis elegans, this protein is Dachshund homolog dac-1.